Here is a 353-residue protein sequence, read N- to C-terminus: GTPase Obg (353 aa).

The Obg domain maps to 1-159 (MKFLDEAKVY…RWIWLRLKLI (159 aa)). One can recognise an OBG-type G domain in the interval 160-327 (ADAGLVGLPN…VLRALVAVIG (168 aa)). GTP-binding positions include 166–173 (GLPNAGKS), 191–195 (FTTLH), 212–215 (DIPG), 279–282 (NKID), and 308–310 (SGV). Positions 173 and 193 each coordinate Mg(2+).

Belongs to the TRAFAC class OBG-HflX-like GTPase superfamily. OBG GTPase family. In terms of assembly, monomer. Mg(2+) is required as a cofactor.

The protein resides in the cytoplasm. Its function is as follows. An essential GTPase which binds GTP, GDP and possibly (p)ppGpp with moderate affinity, with high nucleotide exchange rates and a fairly low GTP hydrolysis rate. Plays a role in control of the cell cycle, stress response, ribosome biogenesis and in those bacteria that undergo differentiation, in morphogenesis control. This Rhodopseudomonas palustris (strain TIE-1) protein is GTPase Obg.